Consider the following 110-residue polypeptide: uncharacterized protein (110 aa).

Disordered stretches follow at residues 1–42 and 66–110; these read MEWG…RAQQ and RQLG…AAEP. Residues 36 to 68 are a coiled coil; the sequence is REERAQQLLDAVEQRQRQLLDTIAACEEMLRQL.

This is an uncharacterized protein from Homo sapiens (Human).